A 384-amino-acid polypeptide reads, in one-letter code: 8-amino-7-oxononanoate synthase (384 aa).

R21 is a binding site for substrate. Residue G108 to F109 participates in pyridoxal 5'-phosphate binding. H133 contacts substrate. Residues S179, H207, and T233 each coordinate pyridoxal 5'-phosphate. Position 236 is an N6-(pyridoxal phosphate)lysine (K236). Position 352 (T352) interacts with substrate.

Belongs to the class-II pyridoxal-phosphate-dependent aminotransferase family. BioF subfamily. In terms of assembly, homodimer. The cofactor is pyridoxal 5'-phosphate.

It carries out the reaction 6-carboxyhexanoyl-[ACP] + L-alanine + H(+) = (8S)-8-amino-7-oxononanoate + holo-[ACP] + CO2. The protein operates within cofactor biosynthesis; biotin biosynthesis. Catalyzes the decarboxylative condensation of pimeloyl-[acyl-carrier protein] and L-alanine to produce 8-amino-7-oxononanoate (AON), [acyl-carrier protein], and carbon dioxide. This chain is 8-amino-7-oxononanoate synthase, found in Shigella boydii serotype 18 (strain CDC 3083-94 / BS512).